A 391-amino-acid chain; its full sequence is Elongation factor Tu (391 aa).

The 192-residue stretch at 10 to 201 (KPHVNIGTIG…QVDAYIPTPV (192 aa)) folds into the tr-type G domain. The tract at residues 19–26 (GHVDHGKT) is G1. Residue 19-26 (GHVDHGKT) coordinates GTP. A Mg(2+)-binding site is contributed by Thr26. The interval 55-59 (GITIS) is G2. The G3 stretch occupies residues 76 to 79 (DCPG). GTP-binding positions include 76–80 (DCPGH) and 131–134 (NKVD). Residues 131–134 (NKVD) form a G4 region. Positions 169–171 (SAL) are G5.

Belongs to the TRAFAC class translation factor GTPase superfamily. Classic translation factor GTPase family. EF-Tu/EF-1A subfamily. Monomer.

It localises to the cytoplasm. It carries out the reaction GTP + H2O = GDP + phosphate + H(+). Functionally, GTP hydrolase that promotes the GTP-dependent binding of aminoacyl-tRNA to the A-site of ribosomes during protein biosynthesis. This Mesorhizobium japonicum (strain LMG 29417 / CECT 9101 / MAFF 303099) (Mesorhizobium loti (strain MAFF 303099)) protein is Elongation factor Tu.